A 294-amino-acid polypeptide reads, in one-letter code: Proteasome subunit beta (294 aa).

Residues 1-65 constitute a propeptide, removed in mature form; by autocatalysis; it reads MTADRPALRT…MESGDLAPHG (65 aa). T66 (nucleophile) is an active-site residue.

The protein belongs to the peptidase T1B family. The 20S proteasome core is composed of 14 alpha and 14 beta subunits that assemble into four stacked heptameric rings, resulting in a barrel-shaped structure. The two inner rings, each composed of seven catalytic beta subunits, are sandwiched by two outer rings, each composed of seven alpha subunits. The catalytic chamber with the active sites is on the inside of the barrel. Has a gated structure, the ends of the cylinder being occluded by the N-termini of the alpha-subunits. Is capped by the proteasome-associated ATPase, ARC.

The protein localises to the cytoplasm. It carries out the reaction Cleavage of peptide bonds with very broad specificity.. It functions in the pathway protein degradation; proteasomal Pup-dependent pathway. Its activity is regulated as follows. The formation of the proteasomal ATPase ARC-20S proteasome complex, likely via the docking of the C-termini of ARC into the intersubunit pockets in the alpha-rings, may trigger opening of the gate for substrate entry. Interconversion between the open-gate and close-gate conformations leads to a dynamic regulation of the 20S proteasome proteolysis activity. Functionally, component of the proteasome core, a large protease complex with broad specificity involved in protein degradation. This chain is Proteasome subunit beta, found in Rhodococcus opacus (strain B4).